A 129-amino-acid chain; its full sequence is M-zodatoxin-Lt8k (129 aa).

Positions 1 to 20 (MKYFVVALALVAAFACIAES) are cleaved as a signal peptide. Positions 21–60 (KPAESEHELAEVEEENELADLEDAVWLEHLADLSDLEEAR) are excised as a propeptide.

This sequence belongs to the cationic peptide 06 (cytoinsectotoxin) family. Expressed by the venom gland.

It localises to the secreted. Functionally, insecticidal, cytolytic and antimicrobial peptide. Forms voltage-dependent, ion-permeable channels in membranes. At high concentration causes cell membrane lysis. The chain is M-zodatoxin-Lt8k (cit 1-10) from Lachesana tarabaevi (Spider).